The following is a 99-amino-acid chain: Plastocyanin (99 aa).

The 99-residue stretch at 1-99 (IEIKLGGDDG…AGMVGKVTVQ (99 aa)) folds into the Plastocyanin-like domain. Cu cation-binding residues include H37, C84, H87, and M92.

Belongs to the plastocyanin family. The cofactor is Cu(2+).

The protein resides in the plastid. Its subcellular location is the chloroplast thylakoid membrane. In terms of biological role, participates in electron transfer between P700 and the cytochrome b6-f complex in photosystem I. In Rumex obtusifolius (Bitter dock), this protein is Plastocyanin (PETE).